Reading from the N-terminus, the 277-residue chain is Glutamate racemase (277 aa).

Substrate is bound by residues 13 to 14 (DS) and 45 to 46 (YG). The Proton donor/acceptor role is filled by Cys-76. Substrate is bound at residue 77-78 (NT). The active-site Proton donor/acceptor is the Cys-186. 187–188 (TH) provides a ligand contact to substrate.

The protein belongs to the aspartate/glutamate racemases family.

The enzyme catalyses L-glutamate = D-glutamate. It participates in cell wall biogenesis; peptidoglycan biosynthesis. In terms of biological role, provides the (R)-glutamate required for cell wall biosynthesis. The chain is Glutamate racemase from Ralstonia nicotianae (strain ATCC BAA-1114 / GMI1000) (Ralstonia solanacearum).